The primary structure comprises 430 residues: Enolase (430 aa).

Gln-165 serves as a coordination point for (2R)-2-phosphoglycerate. Residue Glu-207 is the Proton donor of the active site. Positions 244, 287, and 314 each coordinate Mg(2+). (2R)-2-phosphoglycerate-binding residues include Lys-339, Arg-368, Ser-369, and Lys-390. Lys-339 functions as the Proton acceptor in the catalytic mechanism.

The protein belongs to the enolase family. As to quaternary structure, component of the RNA degradosome, a multiprotein complex involved in RNA processing and mRNA degradation. Mg(2+) serves as cofactor.

The protein resides in the cytoplasm. It localises to the secreted. It is found in the cell surface. The catalysed reaction is (2R)-2-phosphoglycerate = phosphoenolpyruvate + H2O. The protein operates within carbohydrate degradation; glycolysis; pyruvate from D-glyceraldehyde 3-phosphate: step 4/5. Catalyzes the reversible conversion of 2-phosphoglycerate (2-PG) into phosphoenolpyruvate (PEP). It is essential for the degradation of carbohydrates via glycolysis. This is Enolase from Xanthomonas axonopodis pv. citri (strain 306).